We begin with the raw amino-acid sequence, 391 residues long: Phosphoglycerate kinase (391 aa).

Substrate is bound by residues 21-23 (DLN), Arg-36, 59-62 (HLGR), Arg-113, and Arg-146. Residues Lys-197, Glu-319, and 345-348 (GGDT) each bind ATP.

The protein belongs to the phosphoglycerate kinase family. In terms of assembly, monomer.

The protein localises to the cytoplasm. It catalyses the reaction (2R)-3-phosphoglycerate + ATP = (2R)-3-phospho-glyceroyl phosphate + ADP. Its pathway is carbohydrate degradation; glycolysis; pyruvate from D-glyceraldehyde 3-phosphate: step 2/5. This Shewanella baltica (strain OS185) protein is Phosphoglycerate kinase.